Reading from the N-terminus, the 440-residue chain is UPF0489 protein C5orf22 homolog (440 aa).

A disordered region spans residues 187 to 207; sequence VEGSSSGIQSSTSESSEDGLM. Over residues 188–200 the composition is skewed to low complexity; it reads EGSSSGIQSSTSE.

It belongs to the UPF0489 family.

This Xenopus tropicalis (Western clawed frog) protein is UPF0489 protein C5orf22 homolog.